The sequence spans 396 residues: Lysophospholipid transporter LplT (396 aa).

Over 1 to 17 (MSESVHTNTSLWSKGMK) the chain is Periplasmic. Residues 18-38 (AVIVAQFLSAFGDNALLFATL) traverse the membrane as a helical segment. Residues 39-52 (ALLKAQFYPEWSQP) lie on the Cytoplasmic side of the membrane. A helical transmembrane segment spans residues 53–73 (ILQMVFVGAYILLAPFVGQVA). Residues 74–90 (DSFAKGRVMMFANGLKL) lie on the Periplasmic side of the membrane. The helical transmembrane segment at 91–111 (LGAASICFGINPFLGYTLVGV) threads the bilayer. Residues 112–144 (GAAAYSPAKYGILGELTTGSKLVKANGLMEASA) are Cytoplasmic-facing. A helical transmembrane segment spans residues 145–165 (IAAILLGSVAGGVLADWHVLV). Position 166 (Ala166) is a topological domain, periplasmic. Residues 167–187 (LAACALAYGGAVVANIYIPKL) traverse the membrane as a helical segment. Residues 188–225 (AARPGQSWNLINMTRSFLNACTSLWCNGETRFSLVGTS) lie on the Cytoplasmic side of the membrane. The chain crosses the membrane as a helical span at residues 226-246 (LFWGAGVTLRFLLVLWVPVAL). The Periplasmic segment spans residues 247 to 255 (GITDNATPT). A helical transmembrane segment spans residues 256–276 (YLNAMVAIGIVVGAGAAAKLV). At 277-279 (TLE) the chain is on the cytoplasmic side. The chain crosses the membrane as a helical span at residues 280–300 (TVSRCMPAGILIGVVVPIFSL). Topologically, residues 301 to 303 (QHE) are periplasmic. The helical transmembrane segment at 304–324 (LLPAYALLMLIGVLGGFFVVP) threads the bilayer. Residues 325-342 (LNALLQERGKKSVGAGNA) are Cytoplasmic-facing. The helical transmembrane segment at 343–363 (IAVQNLGENSAMLLMLGIYSL) threads the bilayer. The Periplasmic segment spans residues 364 to 365 (AV). A helical transmembrane segment spans residues 366-386 (MVGIPVVPIGIGFGALFALAI). At 387–396 (TALWIWQRRH) the chain is on the cytoplasmic side.

The protein belongs to the major facilitator superfamily. LplT (TC 2.A.1.42) family.

The protein resides in the cell inner membrane. In terms of biological role, catalyzes the facilitated diffusion of 2-acyl-glycero-3-phosphoethanolamine (2-acyl-GPE) into the cell. This chain is Lysophospholipid transporter LplT, found in Shigella flexneri.